The following is a 332-amino-acid chain: MAKDPVRVLVTGAAGQIGYALVPMIARGVMLGADQPVILHMLDIPPAAEALNGVKMELVDAAFPLLKGVVATTDAVEACTGVNVAVMVGGFPRKEGMERKDVMSKNVSIYKSQASALEKHAAPNCKVLVVANPANTNALILKEYAPSIPEKNISCLTRLDHNRALGQISERLNVQVSDVKNVIIWGNHSSSQYPDVNHATVATPAGEKPVRELVADDAWLNGEFISTVQQRGAAIIKARKLSSALSAASSACDHIRDWVLGTPEGTWVSMGVYSDGSYNVPAGLIYSFPVACKNGEWSIVQGLPIDEFSRKKLDATAEELSEEKALAYSCLT.

NAD(+) contacts are provided by residues 16 to 17, Asp43, and Gly90; that span reads QI. Arg99 provides a ligand contact to oxaloacetate. Gln113 and Asn132 together coordinate NAD(+). Oxaloacetate-binding residues include Asn132, Arg163, His188, and Ser243. His188 (proton acceptor) is an active-site residue.

The protein belongs to the LDH/MDH superfamily. MDH type 2 family. In terms of assembly, homodimer.

It is found in the cytoplasm. The enzyme catalyses (S)-malate + NAD(+) = oxaloacetate + NADH + H(+). Functionally, catalyzes the reduction of the carbonyl group of oxalacetic acid. No activity with pulegone. This chain is Malate dehydrogenase (MD1), found in Nicotiana tabacum (Common tobacco).